Here is a 436-residue protein sequence, read N- to C-terminus: Putative permease MJ0326 (436 aa).

Transmembrane regions (helical) follow at residues 24–44 (LAGI…PQIL), 51–71 (FGAV…VMGL), 79–99 (LAPG…GMGI), 103–123 (VALG…LTKI), 139–159 (TAVG…GIIV), 171–191 (LMEP…ILVS), 194–214 (VIGA…ILGI), 235–255 (LDIM…FFFV), 322–342 (GFVS…YPVV), 345–365 (IPPY…MRSV), 381–401 (ITLL…LGFI), and 416–436 (VHWL…YLSG).

This sequence belongs to the nucleobase:cation symporter-2 (NCS2) (TC 2.A.40) family. Azg-like subfamily.

It is found in the cell membrane. The sequence is that of Putative permease MJ0326 from Methanocaldococcus jannaschii (strain ATCC 43067 / DSM 2661 / JAL-1 / JCM 10045 / NBRC 100440) (Methanococcus jannaschii).